Here is a 66-residue protein sequence, read N- to C-terminus: MSTTSSSSTFSTRTASLSQSYTNSLKKEAAQKTLENWEYQAIHALQNNSSFPAIRRSMRKILADPS.

Residues 1-18 (MSTTSSSSTFSTRTASLS) are compositionally biased toward low complexity. The disordered stretch occupies residues 1-22 (MSTTSSSSTFSTRTASLSQSYT).

This is an uncharacterized protein from Schizosaccharomyces pombe (strain 972 / ATCC 24843) (Fission yeast).